We begin with the raw amino-acid sequence, 252 residues long: Indole-3-glycerol phosphate synthase (252 aa).

The protein belongs to the TrpC family.

It catalyses the reaction 1-(2-carboxyphenylamino)-1-deoxy-D-ribulose 5-phosphate + H(+) = (1S,2R)-1-C-(indol-3-yl)glycerol 3-phosphate + CO2 + H2O. It participates in amino-acid biosynthesis; L-tryptophan biosynthesis; L-tryptophan from chorismate: step 4/5. The polypeptide is Indole-3-glycerol phosphate synthase (Leptospira interrogans serogroup Icterohaemorrhagiae serovar copenhageni (strain Fiocruz L1-130)).